The sequence spans 621 residues: UvrABC system protein C (621 aa).

One can recognise a GIY-YIG domain in the interval 20-98 (TAPGVYRMYA…IKSLTPRYNV (79 aa)). The UVR domain occupies 207 to 242 (DLLAEELIQAMQVASEHLEFEQAARLRDLLTSLRSM).

The protein belongs to the UvrC family. As to quaternary structure, interacts with UvrB in an incision complex.

It localises to the cytoplasm. The UvrABC repair system catalyzes the recognition and processing of DNA lesions. UvrC both incises the 5' and 3' sides of the lesion. The N-terminal half is responsible for the 3' incision and the C-terminal half is responsible for the 5' incision. This chain is UvrABC system protein C, found in Xylella fastidiosa (strain M23).